A 361-amino-acid chain; its full sequence is tRNA 2-selenouridine synthase (361 aa).

The Rhodanese domain maps to 14 to 137 (LIADTPIIDV…LRQTAIQATI (124 aa)). Residue C97 is the S-selanylcysteine intermediate of the active site.

The protein belongs to the SelU family. In terms of assembly, monomer.

It catalyses the reaction 5-methylaminomethyl-2-thiouridine(34) in tRNA + selenophosphate + (2E)-geranyl diphosphate + H2O + H(+) = 5-methylaminomethyl-2-selenouridine(34) in tRNA + (2E)-thiogeraniol + phosphate + diphosphate. The enzyme catalyses 5-methylaminomethyl-2-thiouridine(34) in tRNA + (2E)-geranyl diphosphate = 5-methylaminomethyl-S-(2E)-geranyl-thiouridine(34) in tRNA + diphosphate. The catalysed reaction is 5-methylaminomethyl-S-(2E)-geranyl-thiouridine(34) in tRNA + selenophosphate + H(+) = 5-methylaminomethyl-2-(Se-phospho)selenouridine(34) in tRNA + (2E)-thiogeraniol. It carries out the reaction 5-methylaminomethyl-2-(Se-phospho)selenouridine(34) in tRNA + H2O = 5-methylaminomethyl-2-selenouridine(34) in tRNA + phosphate. In terms of biological role, involved in the post-transcriptional modification of the uridine at the wobble position (U34) of tRNA(Lys), tRNA(Glu) and tRNA(Gln). Catalyzes the conversion of 2-thiouridine (S2U-RNA) to 2-selenouridine (Se2U-RNA). Acts in a two-step process involving geranylation of 2-thiouridine (S2U) to S-geranyl-2-thiouridine (geS2U) and subsequent selenation of the latter derivative to 2-selenouridine (Se2U) in the tRNA chain. In Escherichia coli O6:H1 (strain CFT073 / ATCC 700928 / UPEC), this protein is tRNA 2-selenouridine synthase.